The chain runs to 166 residues: Small ribosomal subunit protein bS18m (166 aa).

Residues 1–31 constitute a mitochondrion transit peptide; it reads MLGRRIFSPAPNRGFILCNLIQSNNSTRRGF. The tract at residues 29 to 48 is disordered; it reads RGFSDNRKFNERNSEASSNV. Over residues 30 to 42 the composition is skewed to basic and acidic residues; it reads GFSDNRKFNERNS.

This sequence belongs to the bacterial ribosomal protein bS18 family. As to quaternary structure, component of the mitochondrial small ribosomal subunit (mt-SSU). Mature yeast 74S mitochondrial ribosomes consist of a small (37S) and a large (54S) subunit. The 37S small subunit contains a 15S ribosomal RNA (15S mt-rRNA) and at least 32 different proteins. The 54S large subunit contains a 21S rRNA (21S mt-rRNA) and at least 45 different proteins.

Its subcellular location is the mitochondrion. Component of the mitochondrial ribosome (mitoribosome), a dedicated translation machinery responsible for the synthesis of mitochondrial genome-encoded proteins, including at least some of the essential transmembrane subunits of the mitochondrial respiratory chain. The mitoribosomes are attached to the mitochondrial inner membrane and translation products are cotranslationally integrated into the membrane. The chain is Small ribosomal subunit protein bS18m (rsm18) from Schizosaccharomyces pombe (strain 972 / ATCC 24843) (Fission yeast).